Here is a 350-residue protein sequence, read N- to C-terminus: Chorismate synthase (350 aa).

R48 provides a ligand contact to NADP(+). FMN contacts are provided by residues 125–127, G277, 292–296, and R318; these read RSS and KPIPS.

This sequence belongs to the chorismate synthase family. In terms of assembly, homotetramer. FMNH2 is required as a cofactor.

It catalyses the reaction 5-O-(1-carboxyvinyl)-3-phosphoshikimate = chorismate + phosphate. Its pathway is metabolic intermediate biosynthesis; chorismate biosynthesis; chorismate from D-erythrose 4-phosphate and phosphoenolpyruvate: step 7/7. Functionally, catalyzes the anti-1,4-elimination of the C-3 phosphate and the C-6 proR hydrogen from 5-enolpyruvylshikimate-3-phosphate (EPSP) to yield chorismate, which is the branch point compound that serves as the starting substrate for the three terminal pathways of aromatic amino acid biosynthesis. This reaction introduces a second double bond into the aromatic ring system. The chain is Chorismate synthase from Maridesulfovibrio salexigens (strain ATCC 14822 / DSM 2638 / NCIMB 8403 / VKM B-1763) (Desulfovibrio salexigens).